Reading from the N-terminus, the 223-residue chain is MDHSQCLVTIYAAAVLLGLRLQQGSCQHYLHIRPAPSDNLPLVDLIEHPDPIFDPKEKDLNETLLRSLMGGHFDPNFMAMSLPEDRLGVDDLAELDLLLRQRPSGAMPGEIKGLEFYDGLQPGKKHRLSKKLRRKLQMWLWSQTFCPVLYTWNDLGSRFWPRYVKVGSCYSKRSCSVPEGMVCKPAKSVHLTILRWRCQRRGGQRCTWIPIQYPIIAECKCSC.

The signal sequence occupies residues 1 to 26 (MDHSQCLVTIYAAAVLLGLRLQQGSC). Asn-61 carries an N-linked (GlcNAc...) asparagine glycan. Disulfide bonds link Cys-146–Cys-183, Cys-169–Cys-219, Cys-175–Cys-221, and Cys-198–Cys-206.

The protein belongs to the noggin family. In terms of assembly, homodimer.

The protein localises to the secreted. Its function is as follows. Inhibitor of bone morphogenetic proteins (BMP) signaling. Controls somitogenesis by sequestering the BMP-4 activity which in turn differentiates distinct subtypes of the mesoderm along the mediolateral axis. This Gallus gallus (Chicken) protein is Noggin (NOG).